A 142-amino-acid chain; its full sequence is Protein spalt-accessory (142 aa).

The signal sequence occupies residues 1–16 (MKLLIALFALVTAVNA). The disordered stretch occupies residues 75 to 142 (GFAGQGSPNQ…HHEHHGHHRH (68 aa)). The span at 107 to 124 (GHFHENPHEYPEHHGDHH) shows a compositional bias: basic and acidic residues. Residues 125-142 (REHHEHHGHHEHHGHHRH) show a composition bias toward basic residues.

The protein localises to the secreted. Functionally, likely to be involved in the establishment of the head. The chain is Protein spalt-accessory (sala) from Drosophila melanogaster (Fruit fly).